Reading from the N-terminus, the 310-residue chain is Aspartate carbamoyltransferase catalytic subunit (310 aa).

Arginine 58 and threonine 59 together coordinate carbamoyl phosphate. Lysine 86 is a binding site for L-aspartate. Positions 108, 136, and 139 each coordinate carbamoyl phosphate. The L-aspartate site is built by arginine 169 and arginine 224. The carbamoyl phosphate site is built by glycine 265 and proline 266.

This sequence belongs to the aspartate/ornithine carbamoyltransferase superfamily. ATCase family. As to quaternary structure, heterododecamer (2C3:3R2) of six catalytic PyrB chains organized as two trimers (C3), and six regulatory PyrI chains organized as three dimers (R2).

The enzyme catalyses carbamoyl phosphate + L-aspartate = N-carbamoyl-L-aspartate + phosphate + H(+). The protein operates within pyrimidine metabolism; UMP biosynthesis via de novo pathway; (S)-dihydroorotate from bicarbonate: step 2/3. In terms of biological role, catalyzes the condensation of carbamoyl phosphate and aspartate to form carbamoyl aspartate and inorganic phosphate, the committed step in the de novo pyrimidine nucleotide biosynthesis pathway. The protein is Aspartate carbamoyltransferase catalytic subunit of Citrifermentans bemidjiense (strain ATCC BAA-1014 / DSM 16622 / JCM 12645 / Bem) (Geobacter bemidjiensis).